Here is a 284-residue protein sequence, read N- to C-terminus: Pantothenate synthetase (284 aa).

30–37 (MGFLHEGH) is a binding site for ATP. Histidine 37 functions as the Proton donor in the catalytic mechanism. Glutamine 61 contributes to the (R)-pantoate binding site. Position 61 (glutamine 61) interacts with beta-alanine. 147–150 (GRKD) lines the ATP pocket. Glutamine 153 serves as a coordination point for (R)-pantoate. Residues valine 176 and 184–187 (MSSR) contribute to the ATP site.

The protein belongs to the pantothenate synthetase family. Homodimer.

The protein localises to the cytoplasm. It carries out the reaction (R)-pantoate + beta-alanine + ATP = (R)-pantothenate + AMP + diphosphate + H(+). The protein operates within cofactor biosynthesis; (R)-pantothenate biosynthesis; (R)-pantothenate from (R)-pantoate and beta-alanine: step 1/1. In terms of biological role, catalyzes the condensation of pantoate with beta-alanine in an ATP-dependent reaction via a pantoyl-adenylate intermediate. This is Pantothenate synthetase from Pelobacter propionicus (strain DSM 2379 / NBRC 103807 / OttBd1).